The following is an 803-amino-acid chain: Volume-regulated anion channel subunit LRRC8C (803 aa).

The Cytoplasmic segment spans residues 1-22; it reads MIPVTEFRQFSEQQPAFRVLKP. The helical transmembrane segment at 23-43 threads the bilayer; that stretch reads WWDVFTDYLSVAMLMIGVFGC. Residues 44–125 are Extracellular-facing; the sequence is TLQVMQDKII…YERALHWYAK (82 aa). 2 disulfides stabilise this stretch: C54/C308 and C115/C293. N-linked (GlcNAc...) asparagine glycans are attached at residues N64 and N70. A helical membrane pass occupies residues 126–146; that stretch reads YFPYLVLIHTLVFMLCSNFWF. At 147–266 the chain is on the cytoplasmic side; that stretch reads KFPGSSSKIE…ILYAMYVRQT (120 aa). The tract at residues 177–209 is disordered; it reads EVSGEDSEEKDNRKNNMSRSNTTQSGPEGSLVN. A compositionally biased stretch (polar residues) spans 191-209; it reads NNMSRSNTTQSGPEGSLVN. Residues S212 and S215 each carry the phosphoserine modification. A helical transmembrane segment spans residues 267-287; the sequence is VLKVIKFLIIIAYNSALVSKV. Residues 288–320 lie on the Extracellular side of the membrane; that stretch reads QFTVDCNVDIQDMTGYKNFSCNHTMAHLFSKLS. Residues 321-341 form a helical membrane-spanning segment; that stretch reads FCYLCFVSIYGLTCLYTLYWL. At 342–803 the chain is on the cytoplasmic side; sequence FYRSLKEYSF…SDVREQMKTE (462 aa). LRR repeat units lie at residues 397-419, 420-443, 446-465, 468-490, 492-513, 515-536, 543-563, 566-586, 590-611, 613-634, 638-659, 661-682, 684-705, 707-728, 730-751, 753-774, and 776-799; these read ENKL…QKLQ, TNAH…VFEI, LQSL…TIAQ, NLQE…SFLK, NLKV…MYGL, NLEE…VTLE, SLKI…VVDV, HLQK…NNLK, NLTE…VFSL, SLQE…VSFQ, KLTV…IKKL, SLER…LFLC, KIRY…IGVL, SLQY…LYFC, KLKT…IGNL, FLSY…LGDC, and ALKR…VREQ.

This sequence belongs to the LRRC8 family. As to quaternary structure, heterohexamer; oligomerizes with other LRRC8 proteins (LRRC8A, LRRC8B, LRRC8D and/or LRRC8E) to form a heterohexamer. Homoheptamer; inactive, likely because it is not targeted to the plasma membrane in the absence of LRRC8A. In vivo, the subunit composition may depend primarily on expression levels, and heterooligomeric channels containing various proportions of the different LRRC8 proteins may coexist.

The protein resides in the cell membrane. The protein localises to the endoplasmic reticulum membrane. The enzyme catalyses chloride(in) = chloride(out). The catalysed reaction is iodide(out) = iodide(in). It catalyses the reaction taurine(out) = taurine(in). It carries out the reaction 2',3'-cGAMP(out) = 2',3'-cGAMP(in). Its function is as follows. Non-essential component of the volume-regulated anion channel (VRAC, also named VSOAC channel), an anion channel required to maintain a constant cell volume in response to extracellular or intracellular osmotic changes. The VRAC channel conducts iodide better than chloride and can also conduct organic osmolytes like taurine. Plays a redundant role in the efflux of amino acids, such as aspartate and glutamate, in response to osmotic stress. The VRAC channel also mediates transport of immunoreactive cyclic dinucleotide GMP-AMP (2'-3'-cGAMP), an immune messenger produced in response to DNA virus in the cytosol. Channel activity requires LRRC8A plus at least one other family member (LRRC8B, LRRC8C, LRRC8D or LRRC8E); channel characteristics depend on the precise subunit composition. This is Volume-regulated anion channel subunit LRRC8C from Bos taurus (Bovine).